We begin with the raw amino-acid sequence, 180 residues long: Large ribosomal subunit protein uL5 (180 aa).

This sequence belongs to the universal ribosomal protein uL5 family. As to quaternary structure, part of the 50S ribosomal subunit; part of the 5S rRNA/L5/L18/L25 subcomplex. Contacts the 5S rRNA and the P site tRNA. Forms a bridge to the 30S subunit in the 70S ribosome.

Its function is as follows. This is one of the proteins that bind and probably mediate the attachment of the 5S RNA into the large ribosomal subunit, where it forms part of the central protuberance. In the 70S ribosome it contacts protein S13 of the 30S subunit (bridge B1b), connecting the 2 subunits; this bridge is implicated in subunit movement. Contacts the P site tRNA; the 5S rRNA and some of its associated proteins might help stabilize positioning of ribosome-bound tRNAs. In Leuconostoc mesenteroides subsp. mesenteroides (strain ATCC 8293 / DSM 20343 / BCRC 11652 / CCM 1803 / JCM 6124 / NCDO 523 / NBRC 100496 / NCIMB 8023 / NCTC 12954 / NRRL B-1118 / 37Y), this protein is Large ribosomal subunit protein uL5.